A 246-amino-acid polypeptide reads, in one-letter code: tRNA (guanine-N(1)-)-methyltransferase (246 aa).

S-adenosyl-L-methionine-binding positions include glycine 117 and 137–142; that span reads IGDYVL.

It belongs to the RNA methyltransferase TrmD family. As to quaternary structure, homodimer.

It is found in the cytoplasm. The enzyme catalyses guanosine(37) in tRNA + S-adenosyl-L-methionine = N(1)-methylguanosine(37) in tRNA + S-adenosyl-L-homocysteine + H(+). Functionally, specifically methylates guanosine-37 in various tRNAs. The protein is tRNA (guanine-N(1)-)-methyltransferase of Acinetobacter baumannii (strain AB307-0294).